We begin with the raw amino-acid sequence, 1057 residues long: Carbamoyl phosphate synthase large chain (1057 aa).

A carboxyphosphate synthetic domain region spans residues 1 to 401; it reads MPKRNDIKTI…SLLKAIRSLE (401 aa). ATP contacts are provided by Arg-129, Arg-169, Gly-175, Gly-176, Lys-208, Ile-210, Glu-215, Gly-241, Ile-242, His-243, Gln-284, and Glu-298. Residues 133–327 form the ATP-grasp 1 domain; the sequence is RNLMNELNEP…IAKLAAKIAV (195 aa). Residues Gln-284, Glu-298, and Asn-300 each coordinate Mg(2+). The Mn(2+) site is built by Gln-284, Glu-298, and Asn-300. Residues 402-546 form an oligomerization domain region; it reads YGVHHLGLPN…YGTYETENES (145 aa). Positions 547-929 are carbamoyl phosphate synthetic domain; sequence IRSDKKKVVV…ALYKGLVASG (383 aa). Residues 671–861 form the ATP-grasp 2 domain; it reads EALMQRIEIP…MANLAMKAIL (191 aa). ATP contacts are provided by Arg-707, Arg-746, Leu-748, Glu-752, Gly-777, Val-778, His-779, Ser-780, Gln-820, and Glu-832. 3 residues coordinate Mg(2+): Gln-820, Glu-832, and Asn-834. Mn(2+)-binding residues include Gln-820, Glu-832, and Asn-834. The region spanning 930 to 1057 is the MGS-like domain; it reads LQVKDHGTVL…ESMTFNMNQM (128 aa). Residues 930–1057 are allosteric domain; it reads LQVKDHGTVL…ESMTFNMNQM (128 aa).

Belongs to the CarB family. Composed of two chains; the small (or glutamine) chain promotes the hydrolysis of glutamine to ammonia, which is used by the large (or ammonia) chain to synthesize carbamoyl phosphate. Tetramer of heterodimers (alpha,beta)4. The cofactor is Mg(2+). Mn(2+) is required as a cofactor.

It carries out the reaction hydrogencarbonate + L-glutamine + 2 ATP + H2O = carbamoyl phosphate + L-glutamate + 2 ADP + phosphate + 2 H(+). The enzyme catalyses hydrogencarbonate + NH4(+) + 2 ATP = carbamoyl phosphate + 2 ADP + phosphate + 2 H(+). Its pathway is amino-acid biosynthesis; L-arginine biosynthesis; carbamoyl phosphate from bicarbonate: step 1/1. It participates in pyrimidine metabolism; UMP biosynthesis via de novo pathway; (S)-dihydroorotate from bicarbonate: step 1/3. In terms of biological role, large subunit of the glutamine-dependent carbamoyl phosphate synthetase (CPSase). CPSase catalyzes the formation of carbamoyl phosphate from the ammonia moiety of glutamine, carbonate, and phosphate donated by ATP, constituting the first step of 2 biosynthetic pathways, one leading to arginine and/or urea and the other to pyrimidine nucleotides. The large subunit (synthetase) binds the substrates ammonia (free or transferred from glutamine from the small subunit), hydrogencarbonate and ATP and carries out an ATP-coupled ligase reaction, activating hydrogencarbonate by forming carboxy phosphate which reacts with ammonia to form carbamoyl phosphate. The sequence is that of Carbamoyl phosphate synthase large chain from Macrococcus caseolyticus (strain JCSC5402) (Macrococcoides caseolyticum).